A 331-amino-acid chain; its full sequence is Lipoyl synthase (331 aa).

A disordered region spans residues 1–33; the sequence is MSDALIASSSEAPQSPAEQYDPTRKQKSADKTA. Residues 7-19 show a composition bias toward low complexity; the sequence is ASSSEAPQSPAEQ. Over residues 21–33 the composition is skewed to basic and acidic residues; that stretch reads DPTRKQKSADKTA. [4Fe-4S] cluster-binding residues include Cys78, Cys83, Cys89, Cys104, Cys108, Cys111, and Ser318. Residues 89-307 enclose the Radical SAM core domain; that stretch reads CFGKGTATFM…EEEAYKMGFT (219 aa).

This sequence belongs to the radical SAM superfamily. Lipoyl synthase family. The cofactor is [4Fe-4S] cluster.

The protein localises to the cytoplasm. The enzyme catalyses [[Fe-S] cluster scaffold protein carrying a second [4Fe-4S](2+) cluster] + N(6)-octanoyl-L-lysyl-[protein] + 2 oxidized [2Fe-2S]-[ferredoxin] + 2 S-adenosyl-L-methionine + 4 H(+) = [[Fe-S] cluster scaffold protein] + N(6)-[(R)-dihydrolipoyl]-L-lysyl-[protein] + 4 Fe(3+) + 2 hydrogen sulfide + 2 5'-deoxyadenosine + 2 L-methionine + 2 reduced [2Fe-2S]-[ferredoxin]. It participates in protein modification; protein lipoylation via endogenous pathway; protein N(6)-(lipoyl)lysine from octanoyl-[acyl-carrier-protein]: step 2/2. Functionally, catalyzes the radical-mediated insertion of two sulfur atoms into the C-6 and C-8 positions of the octanoyl moiety bound to the lipoyl domains of lipoate-dependent enzymes, thereby converting the octanoylated domains into lipoylated derivatives. This Cupriavidus pinatubonensis (strain JMP 134 / LMG 1197) (Cupriavidus necator (strain JMP 134)) protein is Lipoyl synthase.